The sequence spans 274 residues: Photosystem II extrinsic protein O (274 aa).

Positions 1–28 are cleaved as a signal peptide; that stretch reads MRFRPSIVALLSVCFGLLTFLYSGSAFA.

Belongs to the PsbO family. In terms of assembly, PSII is composed of 1 copy each of membrane proteins PsbA, PsbB, PsbC, PsbD, PsbE, PsbF, PsbH, PsbI, PsbJ, PsbK, PsbL, PsbM, PsbT, PsbX, PsbY, PsbZ, Psb30/Ycf12, peripheral proteins PsbO, CyanoQ (PsbQ), PsbU, PsbV and a large number of cofactors. It forms dimeric complexes. Contacts PsbQ.

The protein resides in the cellular thylakoid membrane. One of the extrinsic, lumenal subunits of photosystem II (PSII), which stabilize and protect the oxygen-evolving complex. PSII is a light-driven water plastoquinone oxidoreductase, using light energy to abstract electrons from H(2)O, generating a proton gradient subsequently used for ATP formation. Required for dimerization of PSII and for binding of PsbQ to PSII. This Synechocystis sp. (strain ATCC 27184 / PCC 6803 / Kazusa) protein is Photosystem II extrinsic protein O.